A 443-amino-acid polypeptide reads, in one-letter code: Crh-like protein 2 (443 aa).

Residues 1-20 (MVRIGSSLLLATLAATTVSA) form the signal peptide. The 286-residue stretch at 21–306 (ASDPPKCSQD…TVECYDPPSG (286 aa)) folds into the GH16 domain. The cysteines at positions 56 and 67 are disulfide-linked. Residue E164 is the Nucleophile of the active site. E168 functions as the Proton donor in the catalytic mechanism. Residue E168 coordinates chitin. N194 and N237 each carry an N-linked (GlcNAc...) asparagine glycan. W257 and T268 together coordinate chitin. 2 N-linked (GlcNAc...) asparagine glycosylation sites follow: N332 and N359. Low complexity-rich tracts occupy residues 350 to 367 (ASSS…SANT) and 378 to 410 (EPGN…SETS). The tract at residues 350–420 (ASSSASGSAN…ASSNKNAAPS (71 aa)) is disordered. Residues 411–420 (ASSNKNAAPS) are compositionally biased toward polar residues. The GPI-like-anchor amidated asparagine moiety is linked to residue N416. A propeptide spans 417–443 (AAPSQNERVLNGSFFAVLVAVVALVTL) (removed in mature form). Residue N427 is glycosylated (N-linked (GlcNAc...) asparagine).

It belongs to the glycosyl hydrolase 16 family. CRH1 subfamily. Post-translationally, the GPI-like anchor contains a phosphoceramide lipid group. The anchor position has not been determined.

It localises to the cell membrane. Its subcellular location is the secreted. The protein localises to the cell wall. The catalysed reaction is Random endo-hydrolysis of N-acetyl-beta-D-glucosaminide (1-&gt;4)-beta-linkages in chitin and chitodextrins.. Its function is as follows. Dual chitinase/transglycosylase that plays a role in cell wall architecture. Chitinase and transglycosylase activities are coupled. Required for the polysaccharide cross-linking at the septa and the cell wall. More specifically, transfers chitin to 1,6-beta-glucan in the cell wall. In Aspergillus fumigatus (strain ATCC MYA-4609 / CBS 101355 / FGSC A1100 / Af293) (Neosartorya fumigata), this protein is Crh-like protein 2.